Here is a 365-residue protein sequence, read N- to C-terminus: Glutamate 5-kinase 1 (365 aa).

K9 is an ATP binding site. Substrate is bound by residues S49, D136, and N148. ATP is bound by residues 168–169 (TD) and 210–216 (TGGMKSK). The region spanning 276-353 (SGEIIIDAGA…DELDFEKTFE (78 aa)) is the PUA domain.

It belongs to the glutamate 5-kinase family.

It localises to the cytoplasm. It carries out the reaction L-glutamate + ATP = L-glutamyl 5-phosphate + ADP. It functions in the pathway amino-acid biosynthesis; L-proline biosynthesis; L-glutamate 5-semialdehyde from L-glutamate: step 1/2. Its function is as follows. Catalyzes the transfer of a phosphate group to glutamate to form L-glutamate 5-phosphate. The protein is Glutamate 5-kinase 1 of Bacillus subtilis (strain 168).